We begin with the raw amino-acid sequence, 501 residues long: Alpha-internexin (501 aa).

The head stretch occupies residues 1 to 87 (MSFGSEHYLC…SQAAARTNEY (87 aa)). Residue Ser72 is modified to Phosphoserine. Residues 88 to 129 (KIIRTNEKEQLQGLNDRFAVFIEKVHQLETQNRALEAELAAL) form a coil 1A region. The IF rod domain occupies 94-407 (EKEQLQGLND…KLLEGEETRF (314 aa)). The segment at 130 to 142 (RQRHAEPSRVGEL) is linker 1. The interval 143-238 (FQRELRELRA…QVHDEEVAEL (96 aa)) is coil 1B. Ser219 carries the post-translational modification Phosphoserine. The linker 2 stretch occupies residues 239-262 (LATLQASSQAAAEVDVAVAKPDLT). The tract at residues 263–408 (SALREIRAQY…LLEGEETRFS (146 aa)) is coil 2. Position 290 is an N6-acetyllysine (Lys290). Residues Ser335 and Ser498 each carry the phosphoserine modification. The interval 409 to 501 (TGGLSISGLN…EESTSSSQKM (93 aa)) is tail. The interval 441 to 501 (SAGLSLKKEE…EESTSSSQKM (61 aa)) is disordered. Residues 488 to 501 (KSATEESTSSSQKM) show a composition bias toward polar residues.

This sequence belongs to the intermediate filament family. In terms of assembly, forms homodimers (in vitro). Forms heterodimers with NEFL, NEFM or NEFH (in vitro). Post-translationally, O-glycosylated.

In terms of biological role, class-IV neuronal intermediate filament that is able to self-assemble. It is involved in the morphogenesis of neurons. It may form an independent structural network without the involvement of other neurofilaments or it may cooperate with NEFL to form the filamentous backbone to which NEFM and NEFH attach to form the cross-bridges. May also cooperate with the neuronal intermediate filament protein PRPH to form filamentous networks. In Mus musculus (Mouse), this protein is Alpha-internexin (Ina).